A 1534-amino-acid chain; its full sequence is DNA polymerase alpha catalytic subunit (1534 aa).

Positions 1-12 (MDEGSADAGASG) are enriched in low complexity. Disordered stretches follow at residues 1–23 (MDEGSADAGASGRRSRARGSEAV), 96–141 (THRT…LSAA), and 864–905 (FNST…GPSY). Residues 116-125 (RKRKQPRPQS) show a composition bias toward basic residues. Residues 127–141 (RPPQQSAAAASLSAA) show a composition bias toward low complexity. Basic and acidic residues-rich tracts occupy residues 864 to 882 (FNSTKRKMNPDTEAARPDE) and 889 to 898 (DEGHHVDQGK). Residues cysteine 1340, cysteine 1343, cysteine 1383, cysteine 1386, cysteine 1422, cysteine 1427, cysteine 1448, and cysteine 1454 each contribute to the Zn(2+) site. The segment at 1340-1386 (CPSCSTTFDCPPVSSLIIGSSSGNVSNPNEGNDASINFWRRMRCPRC) adopts a CysA-type zinc-finger fold. A CysB motif motif is present at residues 1422–1451 (CDDEGCKYSTHSVNLRVMGDSERGTICPNY).

The protein belongs to the DNA polymerase type-B family.

It is found in the nucleus. It carries out the reaction DNA(n) + a 2'-deoxyribonucleoside 5'-triphosphate = DNA(n+1) + diphosphate. Its function is as follows. Polymerase alpha in a complex with DNA primase is a replicative polymerase. This Oryza sativa subsp. japonica (Rice) protein is DNA polymerase alpha catalytic subunit.